The chain runs to 558 residues: Poly(A) polymerase PAPalpha (558 aa).

Residues Met-1–Pro-17 show a composition bias toward polar residues. Positions Met-1–Lys-20 are disordered. ATP is bound by residues Phe-86–Ser-88, Asp-99–Asp-101, Asp-153, Lys-214, Tyr-223, and Gly-232–Val-233. Residues Asp-99, Asp-101, and Asp-153 each contribute to the Mg(2+) site. Residues Val-516–Ser-558 are disordered. The span at Ile-535–Asn-545 shows a compositional bias: basic and acidic residues. Low complexity predominate over residues Ser-547–Ser-558.

The protein belongs to the poly(A) polymerase family. Mg(2+) serves as cofactor. Requires Mn(2+) as cofactor.

Its subcellular location is the nucleus. It carries out the reaction RNA(n) + ATP = RNA(n)-3'-adenine ribonucleotide + diphosphate. In terms of biological role, polymerase that creates the 3'-poly(A) tail of mRNA's. May acquire specificity through interaction with a cleavage and polyadenylation factor. This chain is Poly(A) polymerase PAPalpha (PAPALPHA), found in Candida albicans (strain SC5314 / ATCC MYA-2876) (Yeast).